The primary structure comprises 341 residues: 4-hydroxy-2-oxovalerate aldolase (341 aa).

The 251-residue stretch at 9-259 (VRITEVCLRD…KLDIDLYKMM (251 aa)) folds into the Pyruvate carboxyltransferase domain. 17-18 (RD) contacts substrate. Asp-18 is a binding site for Mn(2+). The Proton acceptor role is filled by His-21. Residues Ser-171 and His-198 each contribute to the substrate site. Mn(2+)-binding residues include His-198 and His-200. Position 289 (Tyr-289) interacts with substrate.

It belongs to the 4-hydroxy-2-oxovalerate aldolase family.

The catalysed reaction is (S)-4-hydroxy-2-oxopentanoate = acetaldehyde + pyruvate. This chain is 4-hydroxy-2-oxovalerate aldolase, found in Bacillus cereus (strain ATCC 10987 / NRS 248).